The primary structure comprises 1418 residues: ABC transporter G family member 38 (1418 aa).

The segment at 1–27 is disordered; sequence MAHYRVSSEVENIMNRDRSHRKNEEED. The ABC transporter 1 domain occupies 147–419; sequence TKIRVLPDRK…FEFMGFKCPE (273 aa). 179 to 186 lines the ATP pocket; sequence GPPGSGKS. The ABC transmembrane type-2 1 domain maps to 497-710; sequence ELLKACLERE…IQTAVSVNEF (214 aa). 6 helical membrane-spanning segments follow: residues 516–536, 548–568, 600–620, 634–654, 659–679, and 729–749; these read TFVLKSLQLIINAILIGVVFW, GIIYMGAIYLEVQMIVFSGFF, IITFPLSFVEVFIVVLITYFT, YLVLALCGQMSYGLFRCIAAV, VVSNTMGCLAVMWLMTFSGYV, and FFVETYWYWIGLLALILSTIL. One can recognise an ABC transporter 2 domain in the interval 821 to 1073; that stretch reads MTFENITYSV…QLIEYFEGIR (253 aa). 866-873 is a binding site for ATP; the sequence is GVSGAGKT. The ABC transmembrane type-2 2 domain maps to 1146 to 1360; the sequence is SQFQACLWKQ…GLYGLTIAQY (215 aa). 7 consecutive transmembrane segments (helical) span residues 1167 to 1187, 1197 to 1217, 1249 to 1269, 1284 to 1304, 1310 to 1330, 1341 to 1361, and 1387 to 1407; these read AVRFSFGAAVGIMYGIIFWSL, IFNSVGAMSTVVGFLSSQSAA, VIIEIPYTMAQACIYGVIVYG, IFFTFISILYSIYTGIMVISV, IASILNGVISTSWNVFSGFTI, WFTYVCPGWWGLYGLTIAQYG, and FLWVVSLTLIAFSMFFVFIYA.

This sequence belongs to the ABC transporter superfamily. ABCG family. PDR (TC 3.A.1.205) subfamily. In terms of tissue distribution, expressed in roots and siliques at low levels.

Its subcellular location is the membrane. May be a general defense protein. In Arabidopsis thaliana (Mouse-ear cress), this protein is ABC transporter G family member 38 (ABCG38).